Here is a 242-residue protein sequence, read N- to C-terminus: Trypsin-1 (242 aa).

The first 15 residues, 1-15 (MISLVFVLLIGAAFA), serve as a signal peptide directing secretion. Residues 16–20 (TEDDK) constitute a propeptide, activation peptide. The region spanning 21 to 240 (IVGGYECKAY…FNDWLTSTMA (220 aa)) is the Peptidase S1 domain. Intrachain disulfides connect C27-C156, C45-C61, C129-C229, C136-C202, C167-C181, and C192-C216. H60 functions as the Charge relay system in the catalytic mechanism. 4 residues coordinate Ca(2+): E72, N74, V77, and E82. D104 serves as the catalytic Charge relay system. S196 serves as the catalytic Charge relay system.

This sequence belongs to the peptidase S1 family. Ca(2+) is required as a cofactor.

The protein localises to the secreted. Its subcellular location is the extracellular space. The catalysed reaction is Preferential cleavage: Arg-|-Xaa, Lys-|-Xaa.. The polypeptide is Trypsin-1 (Salmo salar (Atlantic salmon)).